The following is a 218-amino-acid chain: GTP cyclohydrolase 1 (218 aa).

Zn(2+)-binding residues include Cys109, His112, and Cys180.

Belongs to the GTP cyclohydrolase I family. As to quaternary structure, toroid-shaped homodecamer, composed of two pentamers of five dimers.

It carries out the reaction GTP + H2O = 7,8-dihydroneopterin 3'-triphosphate + formate + H(+). It functions in the pathway cofactor biosynthesis; 7,8-dihydroneopterin triphosphate biosynthesis; 7,8-dihydroneopterin triphosphate from GTP: step 1/1. This is GTP cyclohydrolase 1 from Aeromonas salmonicida (strain A449).